An 856-amino-acid chain; its full sequence is DNA mismatch repair protein MutS (856 aa).

618–625 contributes to the ATP binding site; it reads GPNMGGKS.

This sequence belongs to the DNA mismatch repair MutS family.

In terms of biological role, this protein is involved in the repair of mismatches in DNA. It is possible that it carries out the mismatch recognition step. This protein has a weak ATPase activity. The protein is DNA mismatch repair protein MutS of Shewanella baltica (strain OS195).